Here is a 427-residue protein sequence, read N- to C-terminus: Tryptophan synthase beta chain (427 aa).

N6-(pyridoxal phosphate)lysine is present on K100.

It belongs to the TrpB family. As to quaternary structure, tetramer of two alpha and two beta chains. It depends on pyridoxal 5'-phosphate as a cofactor.

The catalysed reaction is (1S,2R)-1-C-(indol-3-yl)glycerol 3-phosphate + L-serine = D-glyceraldehyde 3-phosphate + L-tryptophan + H2O. It participates in amino-acid biosynthesis; L-tryptophan biosynthesis; L-tryptophan from chorismate: step 5/5. In terms of biological role, the beta subunit is responsible for the synthesis of L-tryptophan from indole and L-serine. This is Tryptophan synthase beta chain (trpB) from Streptomyces coelicolor (strain ATCC BAA-471 / A3(2) / M145).